A 242-amino-acid chain; its full sequence is 1-(5-phosphoribosyl)-5-[(5-phosphoribosylamino)methylideneamino] imidazole-4-carboxamide isomerase (242 aa).

Asp-8 (proton acceptor) is an active-site residue. Asp-129 serves as the catalytic Proton donor.

Belongs to the HisA/HisF family.

It is found in the cytoplasm. It carries out the reaction 1-(5-phospho-beta-D-ribosyl)-5-[(5-phospho-beta-D-ribosylamino)methylideneamino]imidazole-4-carboxamide = 5-[(5-phospho-1-deoxy-D-ribulos-1-ylimino)methylamino]-1-(5-phospho-beta-D-ribosyl)imidazole-4-carboxamide. It participates in amino-acid biosynthesis; L-histidine biosynthesis; L-histidine from 5-phospho-alpha-D-ribose 1-diphosphate: step 4/9. The polypeptide is 1-(5-phosphoribosyl)-5-[(5-phosphoribosylamino)methylideneamino] imidazole-4-carboxamide isomerase (Dictyoglomus thermophilum (strain ATCC 35947 / DSM 3960 / H-6-12)).